A 672-amino-acid chain; its full sequence is 2,4-dienoyl-CoA reductase [(2E)-enoyl-CoA-producing] (672 aa).

Residues 25–27, Gly59, and Gln101 each bind FMN; that span reads SMH. Tyr167 functions as the Proton donor in the catalytic mechanism. A substrate-binding site is contributed by Arg176. Arg215 provides a ligand contact to FMN. Residue 253–256 coordinates substrate; the sequence is HEAR. Residues Arg289 and 311-312 each bind FMN; that span reads AR. [4Fe-4S] cluster is bound by residues Cys335 and Cys338. Gln340 is an FAD binding site. An NADP(+)-binding site is contributed by Gln340. 2 residues coordinate [4Fe-4S] cluster: Cys342 and Cys354. 5 residues coordinate FAD: Ala385, Asp404, Gln412, Lys422, and Val449. An NADP(+)-binding site is contributed by 563–564; sequence RK. Residues Lys567 and Trp578 each contribute to the substrate site. FAD contacts are provided by residues Gly649 and 656–658; that span reads LDA. 654–656 is a binding site for NADP(+); that stretch reads MEL.

This sequence in the N-terminal section; belongs to the NADH:flavin oxidoreductase/NADH oxidase family. As to quaternary structure, monomer. Requires FMN as cofactor. FAD serves as cofactor. The cofactor is [4Fe-4S] cluster.

It catalyses the reaction a 4,5-saturated-(2E)-enoyl-CoA + NADP(+) = a (2E,4E)-dienoyl-CoA + NADPH + H(+). It carries out the reaction a (2E,4Z)-dienoyl-CoA + NADPH + H(+) = a 4,5-saturated-(2E)-enoyl-CoA + NADP(+). The enzyme catalyses (2E)-decenoyl-CoA + NADP(+) = (2E,4E)-decadienoyl-CoA + NADPH + H(+). The catalysed reaction is (2E)-decenoyl-CoA + NADP(+) = (2E,4Z)-decadienoyl-CoA + NADPH + H(+). Its pathway is lipid metabolism; fatty acid beta-oxidation. With respect to regulation, is non-competitively inhibited by NADH. Functions as an auxiliary enzyme in the beta-oxidation of unsaturated fatty acids with double bonds at even carbon positions. Catalyzes the NADPH-dependent reduction of the C4-C5 double bond of the acyl chain of 2,4-dienoyl-CoA to yield 2-trans-enoyl-CoA. Acts on both isomers, 2-trans,4-cis- and 2-trans,4-trans-decadienoyl-CoA, with almost equal efficiency. Is not active with NADH instead of NADPH. Does not show cis-&gt;trans isomerase activity. The protein is 2,4-dienoyl-CoA reductase [(2E)-enoyl-CoA-producing] of Escherichia coli (strain K12).